The primary structure comprises 4226 residues: Guanylate cyclase alpha (4226 aa).

Over 1–104 (MSDSKKHYNE…SFIFKGLYEQ (104 aa)) the chain is Cytoplasmic. Residues 105–125 (FLRLPNIWFLLISLLEFIPQY) form a helical membrane-spanning segment. Topologically, residues 126-131 (QNLSNY) are extracellular. An N-linked (GlcNAc...) asparagine glycan is attached at Asn-127. Residues 132–152 (MYYSKHSSFFLLLFFICVSII) form a helical membrane-spanning segment. Topologically, residues 153–337 (KNIYEDSRRS…LGYVNKELNS (185 aa)) are cytoplasmic. Residues 338–358 (YTIIGLIFTFICVFISVLFKW) form a helical membrane-spanning segment. Residues 359–392 (TEDDKFRNGSHFFLITVKDNICESIVKYTLLYSN) lie on the Extracellular side of the membrane. Asn-366 is a glycosylation site (N-linked (GlcNAc...) asparagine). The chain crosses the membrane as a helical span at residues 393–413 (IIPISILISVDLISILQSILI). The Cytoplasmic segment spans residues 414–2083 (ENDNHISTFE…FIYGSKHLYT (1670 aa)). Disordered regions lie at residues 552–572 (EHSQTLDNNNNNDNNNNNNIC), 832–904 (SSKN…SNND), 968–989 (INNNNNNNNDQKTNNLKYKSSS), and 1740–1765 (NINKNYKYDKNDKHNNNNNNNNNNSN). The span at 558 to 570 (DNNNNNDNNNNNN) shows a compositional bias: low complexity. Residues 838-847 (TLDDPTELIS) are compositionally biased toward acidic residues. Residues 854 to 873 (LRDKYEHTSDKKNDTNKNRD) are compositionally biased toward basic and acidic residues. Low complexity predominate over residues 874 to 904 (GANNSNNNNNKDVSNNKNKNNNNYNYNSNND). Residues 1745 to 1754 (YKYDKNDKHN) are compositionally biased toward basic and acidic residues. Low complexity predominate over residues 1755–1765 (NNNNNNNNNSN). The chain crosses the membrane as a helical span at residues 2084-2104 (ISIILYWNFFKNILLILPIFF). Residues 2105–2119 (YQAYASWSCVKIYPE) lie on the Extracellular side of the membrane. The helical transmembrane segment at 2120-2140 (LLYTFFSIFWVFIPIIYYMFL) threads the bilayer. Topologically, residues 2141–2169 (QHNLNYDILYNIPLFYALSRRRYNMNCFK) are cytoplasmic. A helical transmembrane segment spans residues 2170 to 2190 (FLPWIFEAIFYSMIIYFFAYA). Over 2191–2202 (ALKENSHLNNGE) the chain is Extracellular. Residues 2203–2223 (VITINTFGNICFIGCLLISIL) traverse the membrane as a helical segment. The Cytoplasmic portion of the chain corresponds to 2224–2235 (RLFLEGSLWSPS). Residues 2236-2256 (ILITCFGCFLFVFFPSLLFIC) form a helical membrane-spanning segment. Residues 2257 to 2275 (FAYLSNEYIREVFRQTFLW) lie on the Extracellular side of the membrane. Residues 2276–2296 (APLYVLLILWFSTCIISYIFI) traverse the membrane as a helical segment. Topologically, residues 2297–2787 (NFTKSILFPN…QIHKKNKFYK (491 aa)) are cytoplasmic. The interval 2477 to 2505 (NNDNNNDDNDNDNNNNNNNNDNYNNNDHN) is disordered. The segment covering 2488 to 2502 (DNNNNNNNNDNYNNN) has biased composition (low complexity). Residues 2788 to 2808 (TFTPWYRFIFLLLGVFFLYVW) form a helical membrane-spanning segment. Over 2809-2828 (KLESSLSQLWNMPSDASTDV) the chain is Extracellular. The chain crosses the membrane as a helical span at residues 2829-2849 (FILFLSLLLELVLLAATVTTF). At 2850–2860 (FSNIFIENFNK) the chain is on the cytoplasmic side. Residues 2861–2881 (IISAVVILIITYHVVSYSVTH) traverse the membrane as a helical segment. Over 2882–2900 (IDGVFQAVLFPLYTFVILR) the chain is Extracellular. Residues 2901–2921 (LPFVNAVLCNIIFLGLFIIRF) traverse the membrane as a helical segment. Residues 2922-2930 (NGDHFLDKK) lie on the Cytoplasmic side of the membrane. The helical transmembrane segment at 2931 to 2951 (GLAHYIPLFIGVDVFVGFVGY) threads the bilayer. Residues 2952-3008 (RLEYNQRKNFLLEYSVESSRRKQREILNTMLPPFVVDEMIYSELNEEGIPISLKAED) are Extracellular-facing. The chain crosses the membrane as a helical span at residues 3009–3029 (ISTVTIIFCDIYDFQNIVASI). A Guanylate cyclase 1 domain is found at 3013–3270 (TIIFCDIYDF…DTVNTASRMK (258 aa)). The Cytoplasmic segment spans residues 3030–3738 (EPTRLVEVLD…SNINSIEQAL (709 aa)). 2 disordered regions span residues 3077-3150 (EDEL…FEED) and 3201-3230 (DANDDTHNVNDSFNNDKAENDNTNTDNNKP). 2 stretches are compositionally biased toward low complexity: residues 3083 to 3098 (NKYSNNNKNNNNNYYY) and 3108 to 3138 (NNNNNNNNNNNNNNNNNNNNLNNNNNNNNVN). Over residues 3140 to 3150 (SDDDGDFFEED) the composition is skewed to acidic residues. Basic and acidic residues predominate over residues 3201–3220 (DANDDTHNVNDSFNNDKAEN). The chain crosses the membrane as a helical span at residues 3739–3759 (IIFLVTFVMQTLISSTVSIVF). Residues 3760-3773 (IDHKRATQTLHINY) lie on the Extracellular side of the membrane. The helical transmembrane segment at 3774-3794 (FAYWSVRSVYTFFGFVLWLLF) threads the bilayer. The Cytoplasmic portion of the chain corresponds to 3795–3811 (HYRTRPEVSSLLNIKWM). A helical membrane pass occupies residues 3812-3832 (IFFLNLLFISAACVFSIAYLW). The Extracellular segment spans residues 3833–3840 (AISETDQT). Residues 3841–3861 (TSYTIWMTNDTIEFFFYLVIL) traverse the membrane as a helical segment. The Cytoplasmic portion of the chain corresponds to 3862–3871 (HHNTGMLFQT). Residues 3872 to 3892 (CILVDLLFITMSLTFIATSVV) traverse the membrane as a helical segment. Position 3893 (Lys-3893) is a topological domain, extracellular. Residues 3894–3914 (TITTDSTVLLIPWYVAFNLIS) traverse the membrane as a helical segment. Residues 3915-4226 (TYCKESIDRR…INVNDRQSNL (312 aa)) are Cytoplasmic-facing. The 135-residue stretch at 3970-4104 (TFLFADICGF…IDVLTGNLME (135 aa)) folds into the Guanylate cyclase 2 domain. Residues Asp-3975, Ile-3976, and Asp-4019 each coordinate Mg(2+).

It in the N-terminal section; belongs to the cation transport ATPase (P-type) (TC 3.A.3) family. Type IV subfamily. In the C-terminal section; belongs to the adenylyl cyclase class-4/guanylyl cyclase family. Mg(2+) is required as a cofactor. Requires Mn(2+) as cofactor.

Its subcellular location is the cell membrane. The protein resides in the cytoplasmic vesicle membrane. The enzyme catalyses GTP = 3',5'-cyclic GMP + diphosphate. Functionally, catalyzes the synthesis of the second messenger cGMP from GTP. In asexual blood stage schizonts, required for cGMP production which is essential for PKG activation, PKG-dependent Ca(2+) release, and ultimately merozoite egress from host erythrocytes. The sequence is that of Guanylate cyclase alpha from Plasmodium falciparum (isolate 3D7).